Consider the following 473-residue polypeptide: H(+)/Cl(-) exchange transporter ClcA (473 aa).

At 1-32 (MKTDTPTFEAQQIVRLRRGRLIRRLVQRDKTP) the chain is on the cytoplasmic side. The chain crosses the membrane as a helical span at residues 33–69 (LAILLMAAVVGTLTGLVGVAFEKAVSWVQNMRIGALV). Topologically, residues 70 to 76 (QVADHAF) are periplasmic. A helical transmembrane segment spans residues 77 to 100 (LLWPLAFILSALLAMVGYFLVRKF). The Selectivity filter part_1 signature appears at 106 to 110 (GSGIP). Residue S107 coordinates chloride. Positions 109 to 116 (IPEIEGAL) form an intramembrane region, helical. Over 117–123 (EELRPVR) the chain is Cytoplasmic. Transmembrane regions (helical) follow at residues 124 to 141 (WWRV…TLGA) and 148 to 166 (EGPT…LDVF). The Selectivity filter part_2 signature appears at 146-150 (GREGP). Over 167–176 (RMRSAEARHT) the chain is Cytoplasmic. 2 consecutive intramembrane regions (helical) follow at residues 177-189 (LLAT…LSAA) and 193-201 (PLAGILFII). At 202-214 (EEMRPQFRYNLIS) the chain is on the cytoplasmic side. A helical membrane pass occupies residues 215–232 (IKAVFTGVIMSSIVFRIF). At 233–252 (NGEAPIIEVGKLSNAPVNTL) the chain is on the periplasmic side. Residues 253-281 (WLYLVLGIIFGCVGPVFNTLVLRTQDMFQ) traverse the membrane as a helical segment. Residues 282–287 (RFHGGE) are Cytoplasmic-facing. Residues 288–309 (IKKWVLMGGAIGGLCGILGLIE) form a helical membrane-spanning segment. Residues 310–329 (PEAAGGGFNLIPIAAAGNFS) lie on the Periplasmic side of the membrane. 2 helical membrane-spanning segments follow: residues 330–349 (VGLL…LCFS) and 355–376 (GIFA…MAAA). Residues 355 to 359 (GIFAP) carry the Selectivity filter part_3 motif. Chloride-binding residues include I356 and F357. At 377–386 (VLFPQYHLEA) the chain is on the periplasmic side. The helical intramembrane region spans 387–401 (GTFAIAGMGALMAAS). The segment at residues 402-404 (VRA) is an intramembrane region (note=Loop between two helices). The helical intramembrane region spans 405 to 416 (PLTGIVLVLEMT). Positions 417 to 421 (DNYQL) form an intramembrane region, note=Loop between two helices. A helical transmembrane segment spans residues 422–438 (ILPMIITCLGATLLAQF). Over 439–473 (LGGKPLYSTILARTLAKQDAEQAAKNQSTPAGENT) the chain is Cytoplasmic. Y445 contacts chloride.

This sequence belongs to the chloride channel (TC 2.A.49) family. ClcA subfamily. As to quaternary structure, homodimer.

Its subcellular location is the cell inner membrane. The enzyme catalyses 2 chloride(in) + H(+)(out) = 2 chloride(out) + H(+)(in). Its function is as follows. Proton-coupled chloride transporter. Functions as antiport system and exchanges two chloride ions for 1 proton. Probably acts as an electrical shunt for an outwardly-directed proton pump that is linked to amino acid decarboxylation, as part of the extreme acid resistance (XAR) response. The protein is H(+)/Cl(-) exchange transporter ClcA of Salmonella arizonae (strain ATCC BAA-731 / CDC346-86 / RSK2980).